The primary structure comprises 961 residues: MEVPAAGRVPAEGAPTAAVAEVRCPGPAPLRLLEWRVAAGAAVRIGSVLAVFEAAASAQSSGASQSRVASGGCVRPARPERRLRSERAGVVRELCAQPGQVVAPGAVLVRLEGCSHPVVMKGLCAECGQDLTQLQSKNGKQQVPLSTATVSMVHSVPELMVSSEQAEQLGREDQQRLHRNRKLVLMVDLDQTLIHTTEQHCQQMSNKGIFHFQLGRGEPMLHTRLRPHCKDFLEKIAKLYELHVFTFGSRLYAHTIAGFLDPEKKLFSHRILSRDECIDPFSKTGNLRNLFPCGDSMVCIIDDREDVWKFAPNLITVKKYVYFQGTGDMNAPPGSRESQTRKKVNHSRGTEVSEPSPPVRDPEGVTQAPGVEPSNGLEKPARELNGSEAATPRDSPRPGKPDERDIWPPAQAPTSSQELAGAPEPQGSCAQGGRVAPGQRPAQGATGTDLDFDLSSDSESSSESEGTKSSSSASDGESEGKRGRQKPKAAPEGAGALAQGSSLEPGRPAAPSLPGEAEPGAHAPDKEPELGGQEEGERDGLCGLGNGCADRKEAETESQNSELSGVTAGESLDQSMEEEEEEDTDEDDHLIYLEEILVRVHTDYYAKYDRYLNKEIEEAPDIRKIVPELKSKVLADVAIIFSGLHPTNFPIEKTREHYHATALGAKILTRLVLSPDAPDRATHLIAARAGTEKVLQAQECGHLHVVNPDWLWSCLERWDKVEEQLFPLRDDHTKAQRENSPAAFPDREGVPPTALFHPMPVLPKAQPGPEVRIYDSNTGKLIRTGARGPPAPSSSLPIRQEPSSFRAVPPPQPQMFGEELPDAQDGEQPGPSRRKRQPSMSETMPLYTLCKEDLESMDKEVDDILGEGSDDSDSEKRRPEEQEEEPQPRKPGTRRERTLGAPASSERSAAGGRGPRGHKRKLNEEDAASESSRESSNEDEGSSSEADEMAKALEAELNDLM.

Met1 is subject to N-acetylmethionine. Positions 178 to 344 (HRNRKLVLMV…SRESQTRKKV (167 aa)) constitute an FCP1 homology domain. The tract at residues 328-589 (DMNAPPGSRE…EEEDTDEDDH (262 aa)) is disordered. Over residues 394–406 (DSPRPGKPDERDI) the composition is skewed to basic and acidic residues. Ser395 carries the phosphoserine modification. A compositionally biased stretch (acidic residues) spans 450 to 462 (LDFDLSSDSESSS). Positions 463–475 (ESEGTKSSSSASD) are enriched in low complexity. The segment covering 575 to 588 (SMEEEEEEDTDEDD) has biased composition (acidic residues). Residues 629-728 (LKSKVLADVA…DKVEEQLFPL (100 aa)) form the BRCT domain. Phosphoserine is present on residues Ser674 and Ser740. Disordered stretches follow at residues 730-752 (DDHT…GVPP) and 780-949 (KLIR…ADEM). Lys780 is subject to N6-acetyllysine. Residues 793–803 (SSSLPIRQEPS) are compositionally biased toward polar residues. Phosphoserine is present on Ser839. The span at 850–859 (CKEDLESMDK) shows a compositional bias: basic and acidic residues. Acidic residues-rich tracts occupy residues 860–873 (EVDD…DDSD) and 937–947 (NEDEGSSSEAD). A phosphoserine mark is found at Ser869 and Ser872.

Homodimer. Interacts with GTF2F1. Interacts with WDR77, SNRPB and SNRNP70. Post-translationally, phosphorylated. In the presence of TFIIF, the phosphorylated form has an increased CTD phosphatase activity. The phosphorylation is required for the physical interaction with GTF2F1. In terms of tissue distribution, ubiquitously expressed.

The protein localises to the nucleus. The protein resides in the cytoplasm. It is found in the cytoskeleton. It localises to the microtubule organizing center. Its subcellular location is the centrosome. The protein localises to the spindle pole. The protein resides in the midbody. The catalysed reaction is O-phospho-L-seryl-[protein] + H2O = L-seryl-[protein] + phosphate. The enzyme catalyses O-phospho-L-threonyl-[protein] + H2O = L-threonyl-[protein] + phosphate. Functionally, processively dephosphorylates 'Ser-2' and 'Ser-5' of the heptad repeats YSPTSPS in the C-terminal domain of the largest RNA polymerase II subunit. This promotes the activity of RNA polymerase II. Plays a role in the exit from mitosis by dephosphorylating crucial mitotic substrates (USP44, CDC20 and WEE1) that are required for M-phase-promoting factor (MPF)/CDK1 inactivation. The sequence is that of RNA polymerase II subunit A C-terminal domain phosphatase (CTDP1) from Homo sapiens (Human).